The sequence spans 439 residues: Phosphoribosylamine--glycine ligase (439 aa).

One can recognise an ATP-grasp domain in the interval 109–317 (REFMERNKIP…LVEISERIID (209 aa)). 136–195 (IDEFGKPVVVKPLGLTGGKGVKVVGYQLKDNEEAKEYAEYLIRKDGKVLIEERTDGVEFT) is a binding site for ATP. Residues Q275, E287, and N289 each contribute to the Mg(2+) site. Mn(2+) contacts are provided by Q275, E287, and N289.

Belongs to the GARS family. Mg(2+) serves as cofactor. Mn(2+) is required as a cofactor.

It catalyses the reaction 5-phospho-beta-D-ribosylamine + glycine + ATP = N(1)-(5-phospho-beta-D-ribosyl)glycinamide + ADP + phosphate + H(+). It functions in the pathway purine metabolism; IMP biosynthesis via de novo pathway; N(1)-(5-phospho-D-ribosyl)glycinamide from 5-phospho-alpha-D-ribose 1-diphosphate: step 2/2. This is Phosphoribosylamine--glycine ligase from Pyrococcus furiosus (strain ATCC 43587 / DSM 3638 / JCM 8422 / Vc1).